A 369-amino-acid polypeptide reads, in one-letter code: Phosphoserine aminotransferase (369 aa).

Arginine 42 contributes to the L-glutamate binding site. The pyridoxal 5'-phosphate site is built by tryptophan 101, threonine 152, aspartate 176, and glutamine 199. Lysine 200 is modified (N6-(pyridoxal phosphate)lysine). Pyridoxal 5'-phosphate is bound at residue 241–242; it reads NT.

The protein belongs to the class-V pyridoxal-phosphate-dependent aminotransferase family. SerC subfamily. As to quaternary structure, homodimer. Pyridoxal 5'-phosphate serves as cofactor.

It is found in the cytoplasm. It carries out the reaction O-phospho-L-serine + 2-oxoglutarate = 3-phosphooxypyruvate + L-glutamate. The enzyme catalyses 4-(phosphooxy)-L-threonine + 2-oxoglutarate = (R)-3-hydroxy-2-oxo-4-phosphooxybutanoate + L-glutamate. The protein operates within amino-acid biosynthesis; L-serine biosynthesis; L-serine from 3-phospho-D-glycerate: step 2/3. Its pathway is cofactor biosynthesis; pyridoxine 5'-phosphate biosynthesis; pyridoxine 5'-phosphate from D-erythrose 4-phosphate: step 3/5. Functionally, catalyzes the reversible conversion of 3-phosphohydroxypyruvate to phosphoserine and of 3-hydroxy-2-oxo-4-phosphonooxybutanoate to phosphohydroxythreonine. The polypeptide is Phosphoserine aminotransferase (Delftia acidovorans (strain DSM 14801 / SPH-1)).